A 239-amino-acid chain; its full sequence is Ribonuclease 3 (239 aa).

The region spanning 11-133 (HTAIQKKLGY…MFAAVSFDAD (123 aa)) is the RNase III domain. E46 is a binding site for Mg(2+). D50 is an active-site residue. Mg(2+) contacts are provided by D119 and E122. Residue E122 is part of the active site. Residues 160–230 (DGKTALQEAL…AKEALKWLEE (71 aa)) enclose the DRBM domain.

Belongs to the ribonuclease III family. Homodimer. Mg(2+) is required as a cofactor.

It is found in the cytoplasm. It carries out the reaction Endonucleolytic cleavage to 5'-phosphomonoester.. Digests double-stranded RNA. Involved in the processing of primary rRNA transcript to yield the immediate precursors to the large and small rRNAs (23S and 16S). Processes some mRNAs, and tRNAs when they are encoded in the rRNA operon. Processes pre-crRNA and tracrRNA of type II CRISPR loci if present in the organism. This is Ribonuclease 3 from Neisseria gonorrhoeae (strain NCCP11945).